We begin with the raw amino-acid sequence, 45 residues long: Large ribosomal subunit protein bL34 (45 aa).

It belongs to the bacterial ribosomal protein bL34 family.

This is Large ribosomal subunit protein bL34 (rpmH) from Streptomyces coelicolor (strain ATCC BAA-471 / A3(2) / M145).